The primary structure comprises 54 residues: Large ribosomal subunit protein bL33A (54 aa).

This sequence belongs to the bacterial ribosomal protein bL33 family.

The sequence is that of Large ribosomal subunit protein bL33A (rpmG1) from Mycobacterium bovis (strain ATCC BAA-935 / AF2122/97).